A 188-amino-acid chain; its full sequence is Ribosome maturation factor RimM (188 aa).

The region spanning 93–175 (QDEFYFTDLI…EIEVQGDLSD (83 aa)) is the PRC barrel domain.

This sequence belongs to the RimM family. In terms of assembly, binds ribosomal protein uS19.

It is found in the cytoplasm. Its function is as follows. An accessory protein needed during the final step in the assembly of 30S ribosomal subunit, possibly for assembly of the head region. Essential for efficient processing of 16S rRNA. May be needed both before and after RbfA during the maturation of 16S rRNA. It has affinity for free ribosomal 30S subunits but not for 70S ribosomes. This Gluconacetobacter diazotrophicus (strain ATCC 49037 / DSM 5601 / CCUG 37298 / CIP 103539 / LMG 7603 / PAl5) protein is Ribosome maturation factor RimM.